A 293-amino-acid polypeptide reads, in one-letter code: 4-hydroxy-tetrahydrodipicolinate synthase (293 aa).

Thr45 lines the pyruvate pocket. The active-site Proton donor/acceptor is Tyr133. Lys161 acts as the Schiff-base intermediate with substrate in catalysis. Ile203 contacts pyruvate.

The protein belongs to the DapA family. Homotetramer; dimer of dimers.

The protein resides in the cytoplasm. It catalyses the reaction L-aspartate 4-semialdehyde + pyruvate = (2S,4S)-4-hydroxy-2,3,4,5-tetrahydrodipicolinate + H2O + H(+). Its pathway is amino-acid biosynthesis; L-lysine biosynthesis via DAP pathway; (S)-tetrahydrodipicolinate from L-aspartate: step 3/4. In terms of biological role, catalyzes the condensation of (S)-aspartate-beta-semialdehyde [(S)-ASA] and pyruvate to 4-hydroxy-tetrahydrodipicolinate (HTPA). This Pseudoalteromonas atlantica (strain T6c / ATCC BAA-1087) protein is 4-hydroxy-tetrahydrodipicolinate synthase.